Reading from the N-terminus, the 158-residue chain is 6,7-dimethyl-8-ribityllumazine synthase (158 aa).

5-amino-6-(D-ribitylamino)uracil-binding positions include Phe23, 61 to 63 (SFE), and 85 to 87 (AVI). (2S)-2-hydroxy-3-oxobutyl phosphate is bound at residue 90–91 (ET). The active-site Proton donor is the His93. 5-amino-6-(D-ribitylamino)uracil is bound at residue Phe118. Position 132 (Arg132) interacts with (2S)-2-hydroxy-3-oxobutyl phosphate.

It belongs to the DMRL synthase family.

It carries out the reaction (2S)-2-hydroxy-3-oxobutyl phosphate + 5-amino-6-(D-ribitylamino)uracil = 6,7-dimethyl-8-(1-D-ribityl)lumazine + phosphate + 2 H2O + H(+). It participates in cofactor biosynthesis; riboflavin biosynthesis; riboflavin from 2-hydroxy-3-oxobutyl phosphate and 5-amino-6-(D-ribitylamino)uracil: step 1/2. In terms of biological role, catalyzes the formation of 6,7-dimethyl-8-ribityllumazine by condensation of 5-amino-6-(D-ribitylamino)uracil with 3,4-dihydroxy-2-butanone 4-phosphate. This is the penultimate step in the biosynthesis of riboflavin. This chain is 6,7-dimethyl-8-ribityllumazine synthase, found in Prochlorococcus marinus (strain AS9601).